A 485-amino-acid chain; its full sequence is MEYKLVIGLEIHIQLGLRTKAFCGCKNEFGGVPNSRICPICLGLPGSLPSVNVELINSAILAGHATNSNIRHVVKFDRKHYYYPDLPKGYQISQNDKPICERGSLLIETSSGLKKINIIRIHMEEDSGKSLHLLDSENQSYIDFNRSGAPLLEIVSAPDISSGDEAVAFLTSLREIFRYLDLSECNMENGSFRCDVNVNLIITESGVEHKTPIAEIKNLNSFKSIKAAIEYEELRQKEEWVQFRKTLDSCGKHTRGFDDKNGVTVVQRDKETVSDYRYFQEPDLPLIEIDDFYIANIKKIKLIEFPFDARVRLKDQYGLSDFDVITLTTDKHLLRYFEEAAINASDPKKVANWILSEVLSVLNDKGISVLEFNLFPSYITELVEFIVAGKISGKMAKKVFLEMMSREVPASVIISENQLEQISDKFVIRQIVFEVLNENPKSIELYKKGKDHAIKFMMGQIMKKSSGKINPILANEILLQSLSNV.

It belongs to the GatB/GatE family. GatB subfamily. Heterotrimer of A, B and C subunits.

The catalysed reaction is L-glutamyl-tRNA(Gln) + L-glutamine + ATP + H2O = L-glutaminyl-tRNA(Gln) + L-glutamate + ADP + phosphate + H(+). It catalyses the reaction L-aspartyl-tRNA(Asn) + L-glutamine + ATP + H2O = L-asparaginyl-tRNA(Asn) + L-glutamate + ADP + phosphate + 2 H(+). Allows the formation of correctly charged Asn-tRNA(Asn) or Gln-tRNA(Gln) through the transamidation of misacylated Asp-tRNA(Asn) or Glu-tRNA(Gln) in organisms which lack either or both of asparaginyl-tRNA or glutaminyl-tRNA synthetases. The reaction takes place in the presence of glutamine and ATP through an activated phospho-Asp-tRNA(Asn) or phospho-Glu-tRNA(Gln). This is Aspartyl/glutamyl-tRNA(Asn/Gln) amidotransferase subunit B from Borrelia garinii subsp. bavariensis (strain ATCC BAA-2496 / DSM 23469 / PBi) (Borreliella bavariensis).